Reading from the N-terminus, the 207-residue chain is Coiled-coil domain-containing protein 124 homolog (207 aa).

Positions 1-90 (MGNPKKRAEK…KAAKKNSSLD (90 aa)) are disordered. Residues 5–71 (KKRAEKAEAA…RLEKEEMESL (67 aa)) adopt a coiled-coil conformation. Basic and acidic residues-rich tracts occupy residues 9 to 28 (EKAEAAKSRKQDEEKKKKDA) and 41 to 65 (NKKEQEAEKRKAALERKAERERLEK).

This sequence belongs to the CCDC124 family. As to quaternary structure, associates with translationally inactive ribosomes in the nonrotated state.

The protein resides in the cytoplasm. It is found in the nucleus. Functionally, ribosome-binding protein involved in ribosome hibernation by associating with translationally inactive ribosomes. Required for translational recovery after starvation from stationary phase. May facilitate rapid translation reactivation by stabilizing the recycling-competent state of inactive ribosomes. This chain is Coiled-coil domain-containing protein 124 homolog, found in Schizosaccharomyces pombe (strain 972 / ATCC 24843) (Fission yeast).